A 318-amino-acid chain; its full sequence is Beta-sarcoglycan (318 aa).

Residues 1 to 32 (MAAAAAAAAEQQSSNGPVKKSMREKAVERRSV) form a disordered region. Residues 1-65 (MAAAAAAAAE…GLRGRKGNLA (65 aa)) lie on the Cytoplasmic side of the membrane. The span at 21 to 32 (SMREKAVERRSV) shows a compositional bias: basic and acidic residues. The chain crosses the membrane as a helical; Signal-anchor for type II membrane protein span at residues 66-86 (ICVIILLFILAVINLIITLVI). The Extracellular segment spans residues 87-318 (WAVIRIGPNG…ISDNPCGNTH (232 aa)). N-linked (GlcNAc...) asparagine glycosylation is found at Asn-158, Asn-211, and Asn-258. Intrachain disulfides connect Cys-288-Cys-314 and Cys-290-Cys-307.

The protein belongs to the sarcoglycan beta/delta/gamma/zeta family. Cross-link to form 2 major subcomplexes: one consisting of SGCB, SGCD and SGCG and the other consisting of SGCB and SGCD. The association between SGCB and SGCG is particularly strong while SGCA is loosely associated with the other sarcoglycans. Post-translationally, disulfide bonds are present. As to expression, highest expression in heart and skeletal muscle. Low expression in brain, kidney, placenta, pancreas and lung. High expression in fetal brain. Also found in fetal lung, kidney and liver.

Its subcellular location is the cell membrane. The protein resides in the sarcolemma. The protein localises to the cytoplasm. It localises to the cytoskeleton. Functionally, component of the sarcoglycan complex, a subcomplex of the dystrophin-glycoprotein complex which forms a link between the F-actin cytoskeleton and the extracellular matrix. This chain is Beta-sarcoglycan (SGCB), found in Homo sapiens (Human).